Reading from the N-terminus, the 306-residue chain is Agmatinase (306 aa).

The Mn(2+) site is built by histidine 128, aspartate 151, histidine 153, aspartate 155, aspartate 232, and aspartate 234.

This sequence belongs to the arginase family. Agmatinase subfamily. Mn(2+) serves as cofactor.

It catalyses the reaction agmatine + H2O = urea + putrescine. The protein operates within amine and polyamine biosynthesis; putrescine biosynthesis via agmatine pathway; putrescine from agmatine: step 1/1. In terms of biological role, catalyzes the formation of putrescine from agmatine. The sequence is that of Agmatinase (speB) from Proteus mirabilis.